The following is a 157-amino-acid chain: Transmembrane protein 50A (157 aa).

Ser-2 is subject to N-acetylserine. Ser-2 bears the Phosphoserine mark. 4 helical membrane-spanning segments follow: residues 26–46 (IAAG…AVMY), 58–78 (TCGV…NGQV), 95–115 (IWLF…MWIL), and 126–146 (VVYP…GGLV).

The protein belongs to the UPF0220 family.

It localises to the membrane. The chain is Transmembrane protein 50A (Tmem50a) from Mus musculus (Mouse).